Consider the following 543-residue polypeptide: Protein lin-9 homolog (543 aa).

Residues 21-82 (REGSLSNTLN…SRSPRRSQRV (62 aa)) form a disordered region. Residues 24–55 (SLSNTLNEKNNLPKSQTTRGRSSYVSMETPTR) show a composition bias toward polar residues. Residues 355–451 (IKKEHIKHLK…VLRQNNTLAS (97 aa)) are a coiled coil.

This sequence belongs to the lin-9 family. In terms of assembly, component of the DREAM complex.

Its subcellular location is the nucleus. This chain is Protein lin-9 homolog (lin9), found in Danio rerio (Zebrafish).